Here is a 122-residue protein sequence, read N- to C-terminus: Neuropeptide B (122 aa).

An N-terminal signal peptide occupies residues 1 to 24; the sequence is MAGPAMLVAAALALCLLLASPGLA. Trp-25 bears the 6'-bromotryptophan mark. A propeptide spanning residues 56–122 is cleaved from the precursor; sequence SEPRGGTRSL…LSLSASDCRK (67 aa).

The protein belongs to the neuropeptide B/W family.

The protein localises to the secreted. May be involved in the regulation of feeding, neuroendocrine system, memory, learning and in the afferent pain pathway. The chain is Neuropeptide B (NPB) from Bos taurus (Bovine).